We begin with the raw amino-acid sequence, 314 residues long: Methionyl-tRNA formyltransferase (314 aa).

Residue 112 to 115 (SLLP) participates in (6S)-5,6,7,8-tetrahydrofolate binding.

The protein belongs to the Fmt family.

The enzyme catalyses L-methionyl-tRNA(fMet) + (6R)-10-formyltetrahydrofolate = N-formyl-L-methionyl-tRNA(fMet) + (6S)-5,6,7,8-tetrahydrofolate + H(+). Its function is as follows. Attaches a formyl group to the free amino group of methionyl-tRNA(fMet). The formyl group appears to play a dual role in the initiator identity of N-formylmethionyl-tRNA by promoting its recognition by IF2 and preventing the misappropriation of this tRNA by the elongation apparatus. This Buchnera aphidicola subsp. Acyrthosiphon pisum (strain 5A) protein is Methionyl-tRNA formyltransferase.